Consider the following 301-residue polypeptide: Phosphoribosylaminoimidazole-succinocarboxamide synthase (301 aa).

This sequence belongs to the SAICAR synthetase family.

It catalyses the reaction 5-amino-1-(5-phospho-D-ribosyl)imidazole-4-carboxylate + L-aspartate + ATP = (2S)-2-[5-amino-1-(5-phospho-beta-D-ribosyl)imidazole-4-carboxamido]succinate + ADP + phosphate + 2 H(+). It functions in the pathway purine metabolism; IMP biosynthesis via de novo pathway; 5-amino-1-(5-phospho-D-ribosyl)imidazole-4-carboxamide from 5-amino-1-(5-phospho-D-ribosyl)imidazole-4-carboxylate: step 1/2. The polypeptide is Phosphoribosylaminoimidazole-succinocarboxamide synthase (Mycolicibacterium vanbaalenii (strain DSM 7251 / JCM 13017 / BCRC 16820 / KCTC 9966 / NRRL B-24157 / PYR-1) (Mycobacterium vanbaalenii)).